We begin with the raw amino-acid sequence, 497 residues long: Interferon regulatory factor 5 (497 aa).

A Nuclear localization signal motif is present at residues 12–18 (PRRVRLK). Residues 14–122 (RVRLKPWLVA…QPYKIYEVCS (109 aa)) constitute a DNA-binding region (IRF tryptophan pentad repeat). The segment at 124–178 (GPAPTESQPTDDYVLGEEEEEEEEELQRMLPGLSITEPALPGPPNAPYSLPKEDT) is disordered. The span at 137–148 (VLGEEEEEEEEE) shows a compositional bias: acidic residues. The short motif at 149–159 (LQRMLPGLSIT) is the Nuclear export signal element. Ser-157 bears the Phosphoserine; by TBK1 mark. Residue Ser-300 is modified to Phosphoserine. Glycyl lysine isopeptide (Lys-Gly) (interchain with G-Cter in ubiquitin) cross-links involve residues Lys-410 and Lys-411. Residue Ser-430 is modified to Phosphoserine. Ser-434 carries the phosphoserine; by IKKB modification. 2 positions are modified to phosphoserine: Ser-436 and Ser-439. Ser-445 carries the phosphoserine; by IKKB modification.

This sequence belongs to the IRF family. In terms of assembly, homodimer, when phosphorylated. Interacts with TASL (via pLxIS motif); interaction takes place downstream of TLR7, TLR8 or TLR9, leading to its activation. Interacts with MYD88 and TRAF6. In terms of processing, phosphorylation of serine and threonine residues by IKBKB in a C-terminal autoinhibitory region, stimulates dimerization, transport into the nucleus, assembly with the coactivator CBP/EP300 and initiation of transcription. 'Lys-63'-linked polyubiquitination by TRAF6 is required for activation.

Its subcellular location is the cytoplasm. It localises to the nucleus. Its activity is regulated as follows. Maintained as a monomer in an autoinhibited state. Phosphorylation and activation follow the following steps: innate adapter protein TASL recruits IRF5, thereby licensing IRF5 for phosphorylation by IKBKB. Phosphorylated IRF5 dissociates from the adapter proteins, dimerizes, and then enters the nucleus to induce IFNs. In terms of biological role, transcription factor that plays a critical role in innate immunity by activating expression of type I interferon (IFN) IFNA and INFB and inflammatory cytokines downstream of endolysosomal toll-like receptors TLR7, TLR8 and TLR9. Regulates the transcription of type I IFN genes (IFN-alpha and IFN-beta) and IFN-stimulated genes (ISG) by binding to an interferon-stimulated response element (ISRE) in their promoters. Can efficiently activate both the IFN-beta (IFNB) and the IFN-alpha (IFNA) genes and mediate their induction downstream of the TLR-activated, MyD88-dependent pathway. The protein is Interferon regulatory factor 5 of Mus musculus (Mouse).